Reading from the N-terminus, the 339-residue chain is Phenylalanine--tRNA ligase alpha subunit (339 aa).

Residue Glu-253 participates in Mg(2+) binding.

This sequence belongs to the class-II aminoacyl-tRNA synthetase family. Phe-tRNA synthetase alpha subunit type 1 subfamily. Tetramer of two alpha and two beta subunits. Mg(2+) serves as cofactor.

It is found in the cytoplasm. It catalyses the reaction tRNA(Phe) + L-phenylalanine + ATP = L-phenylalanyl-tRNA(Phe) + AMP + diphosphate + H(+). This is Phenylalanine--tRNA ligase alpha subunit from Chromohalobacter salexigens (strain ATCC BAA-138 / DSM 3043 / CIP 106854 / NCIMB 13768 / 1H11).